Reading from the N-terminus, the 569-residue chain is F-box/WD repeat-containing protein 5 (569 aa).

The F-box domain occupies 3–49; the sequence is EGGMPLLPDSLVYQIFLSLGPADVLAAGLVCRQWQAVSRDEFLWREQ. The stretch at 90-129 is one WD 1 repeat; it reads EHTDQVLHLSFSHSGYQFASCSKDCTVKIWNNDLTISLLH. Serine 151 carries the phosphoserine; by PLK4 modification. Positions 308–316 match the D-box motif; sequence RRVFDSVLD. 2 WD repeats span residues 470 to 509 and 511 to 551; these read TPNDECFFIFLDVSRDFVASGAEDRHGYIWDRHYNICLAK and RHED…RVLQ.

The protein belongs to the FBXW5 family. Part of the SCF (SKP1-CUL1-F-box) E3 ubiquitin-protein ligase complex SCF(FBXW5) composed of CUL1, SKP1, RBX1 and FBXW5. Component of the DCX(FBXW5) E3 ubiquitin ligase complex, at least composed of (CUL4A or CUL4B), DDB1, FBXW5 and RBX1. Interacts with CDC20, EPS8, TSC1, TSC2 and SASS6. Interacts with TNFAIP8L1; TNFAIP8L1 competes with TSC2 to bind FBXW5 increasing TSC2 stability by preventing its ubiquitination. Phosphorylated at Ser-151 by PLK4 during the G1/S transition, leading to inhibit its ability to ubiquitinate SASS6. Post-translationally, ubiquitinated and degraded by the APC/C complex during mitosis and G1 phase.

The protein resides in the cytoplasm. It participates in protein modification; protein ubiquitination. In terms of biological role, substrate recognition component of both SCF (SKP1-CUL1-F-box protein) and DCX (DDB1-CUL4-X-box) E3 ubiquitin-protein ligase complexes. Substrate recognition component of the SCF(FBXW5) E3 ubiquitin-protein ligase complex which mediates the ubiquitination and subsequent proteasomal degradation of SASS6 during S phase, leading to prevent centriole reduplication. The SCF(FBXW5) complex also mediates ubiquitination and degradation of actin-regulator EPS8 during G2 phase, leading to the transient degradation of EPS8 and subsequent cell shape changes required to allow mitotic progression. Substrate-specific adapter of the DCX(FBXW5) E3 ubiquitin-protein ligase complex which mediates the polyubiquitination and subsequent degradation of TSC2. May also act as a negative regulator of MAP3K7/TAK1 signaling in the interleukin-1B (IL1B) signaling pathway. The protein is F-box/WD repeat-containing protein 5 (Fbxw5) of Rattus norvegicus (Rat).